The primary structure comprises 429 residues: Glucose-1-phosphate adenylyltransferase (429 aa).

Residues Tyr-116, Gly-181, 196–197 (EK), and Ser-214 contribute to the alpha-D-glucose 1-phosphate site.

It belongs to the bacterial/plant glucose-1-phosphate adenylyltransferase family. In terms of assembly, homotetramer.

It carries out the reaction alpha-D-glucose 1-phosphate + ATP + H(+) = ADP-alpha-D-glucose + diphosphate. It participates in glycan biosynthesis; glycogen biosynthesis. In terms of biological role, involved in the biosynthesis of ADP-glucose, a building block required for the elongation reactions to produce glycogen. Catalyzes the reaction between ATP and alpha-D-glucose 1-phosphate (G1P) to produce pyrophosphate and ADP-Glc. The sequence is that of Glucose-1-phosphate adenylyltransferase from Paramagnetospirillum magneticum (strain ATCC 700264 / AMB-1) (Magnetospirillum magneticum).